The chain runs to 685 residues: Threonine--tRNA ligase (685 aa).

The TGS domain occupies 1 to 65 (MSTPASAAPA…DTDVEVEPVA (65 aa)). The segment at 262–568 (DHRKLGSELD…LTEHYAGAFP (307 aa)) is catalytic. Positions 367, 418, and 545 each coordinate Zn(2+).

Belongs to the class-II aminoacyl-tRNA synthetase family. In terms of assembly, homodimer. Zn(2+) serves as cofactor.

It is found in the cytoplasm. It catalyses the reaction tRNA(Thr) + L-threonine + ATP = L-threonyl-tRNA(Thr) + AMP + diphosphate + H(+). Its function is as follows. Catalyzes the attachment of threonine to tRNA(Thr) in a two-step reaction: L-threonine is first activated by ATP to form Thr-AMP and then transferred to the acceptor end of tRNA(Thr). Also edits incorrectly charged L-seryl-tRNA(Thr). This is Threonine--tRNA ligase from Rhodococcus jostii (strain RHA1).